The sequence spans 505 residues: Deoxyguanosinetriphosphate triphosphohydrolase (505 aa).

An HD domain is found at 66-273 (RLTHSMEVQQ…MEAADDISYC (208 aa)).

Belongs to the dGTPase family. Type 1 subfamily. In terms of assembly, homotetramer. Mg(2+) serves as cofactor.

It catalyses the reaction dGTP + H2O = 2'-deoxyguanosine + triphosphate + H(+). Functionally, dGTPase preferentially hydrolyzes dGTP over the other canonical NTPs. This is Deoxyguanosinetriphosphate triphosphohydrolase from Salmonella arizonae (strain ATCC BAA-731 / CDC346-86 / RSK2980).